Consider the following 316-residue polypeptide: 4-hydroxy-3-methylbut-2-enyl diphosphate reductase (316 aa).

[4Fe-4S] cluster is bound at residue Cys12. (2E)-4-hydroxy-3-methylbut-2-enyl diphosphate is bound by residues His41 and His74. Positions 41 and 74 each coordinate dimethylallyl diphosphate. Residues His41 and His74 each coordinate isopentenyl diphosphate. Cys96 is a binding site for [4Fe-4S] cluster. Position 124 (His124) interacts with (2E)-4-hydroxy-3-methylbut-2-enyl diphosphate. His124 lines the dimethylallyl diphosphate pocket. Isopentenyl diphosphate is bound at residue His124. The active-site Proton donor is Glu126. Thr167 contacts (2E)-4-hydroxy-3-methylbut-2-enyl diphosphate. Cys197 provides a ligand contact to [4Fe-4S] cluster. (2E)-4-hydroxy-3-methylbut-2-enyl diphosphate is bound by residues Ser225, Ser226, Asn227, and Ser269. The dimethylallyl diphosphate site is built by Ser225, Ser226, Asn227, and Ser269. The isopentenyl diphosphate site is built by Ser225, Ser226, Asn227, and Ser269.

This sequence belongs to the IspH family. Homodimer. It depends on [4Fe-4S] cluster as a cofactor.

It carries out the reaction isopentenyl diphosphate + 2 oxidized [2Fe-2S]-[ferredoxin] + H2O = (2E)-4-hydroxy-3-methylbut-2-enyl diphosphate + 2 reduced [2Fe-2S]-[ferredoxin] + 2 H(+). The enzyme catalyses dimethylallyl diphosphate + 2 oxidized [2Fe-2S]-[ferredoxin] + H2O = (2E)-4-hydroxy-3-methylbut-2-enyl diphosphate + 2 reduced [2Fe-2S]-[ferredoxin] + 2 H(+). It functions in the pathway isoprenoid biosynthesis; dimethylallyl diphosphate biosynthesis; dimethylallyl diphosphate from (2E)-4-hydroxy-3-methylbutenyl diphosphate: step 1/1. The protein operates within isoprenoid biosynthesis; isopentenyl diphosphate biosynthesis via DXP pathway; isopentenyl diphosphate from 1-deoxy-D-xylulose 5-phosphate: step 6/6. Catalyzes the conversion of 1-hydroxy-2-methyl-2-(E)-butenyl 4-diphosphate (HMBPP) into a mixture of isopentenyl diphosphate (IPP) and dimethylallyl diphosphate (DMAPP). Acts in the terminal step of the DOXP/MEP pathway for isoprenoid precursor biosynthesis. This Escherichia coli O6:H1 (strain CFT073 / ATCC 700928 / UPEC) protein is 4-hydroxy-3-methylbut-2-enyl diphosphate reductase.